A 243-amino-acid chain; its full sequence is Dirigent protein 16 (243 aa).

Positions 1–24 (MMIKQSPFLLLTTILFTVAVFVAA) are cleaved as a signal peptide.

It belongs to the plant dirigent protein family. Homodimer.

The protein resides in the secreted. It localises to the extracellular space. It is found in the apoplast. Dirigent proteins impart stereoselectivity on the phenoxy radical-coupling reaction, yielding optically active lignans from two molecules of coniferyl alcohol in the biosynthesis of lignans, flavonolignans, and alkaloids and thus plays a central role in plant secondary metabolism. This Arabidopsis thaliana (Mouse-ear cress) protein is Dirigent protein 16 (DIR16).